Here is a 118-residue protein sequence, read N- to C-terminus: Large ribosomal subunit protein bL19 (118 aa).

It belongs to the bacterial ribosomal protein bL19 family.

Functionally, this protein is located at the 30S-50S ribosomal subunit interface and may play a role in the structure and function of the aminoacyl-tRNA binding site. The protein is Large ribosomal subunit protein bL19 of Frankia alni (strain DSM 45986 / CECT 9034 / ACN14a).